A 63-amino-acid polypeptide reads, in one-letter code: Large ribosomal subunit protein uL30 (63 aa).

This sequence belongs to the universal ribosomal protein uL30 family. Part of the 50S ribosomal subunit.

This chain is Large ribosomal subunit protein uL30, found in Geobacillus stearothermophilus (Bacillus stearothermophilus).